Consider the following 470-residue polypeptide: Probable citrate synthase, mitochondrial (470 aa).

Catalysis depends on residues His297, His351, and Asp406.

This sequence belongs to the citrate synthase family. As to quaternary structure, homodimer.

It is found in the mitochondrion matrix. It catalyses the reaction oxaloacetate + acetyl-CoA + H2O = citrate + CoA + H(+). It participates in carbohydrate metabolism; tricarboxylic acid cycle; isocitrate from oxaloacetate: step 1/2. The chain is Probable citrate synthase, mitochondrial from Leishmania braziliensis.